The sequence spans 298 residues: Putative cysteine protease YopT-like blr2058 (298 aa).

Basic and acidic residues predominate over residues 1 to 14 (MYNRVDGEYAHTEQ). 2 disordered regions span residues 1-25 (MYNR…ADGS) and 59-80 (SDAI…SSSS). Residues 65 to 80 (SSNTSGLSTSSLSSSS) are compositionally biased toward low complexity. The active site involves Cys-109. Residues 137–162 (NHRSAARRQEQSEKLKTQLKEDKAEG) show a composition bias toward basic and acidic residues. Positions 137-166 (NHRSAARRQEQSEKLKTQLKEDKAEGSHNF) are disordered. Catalysis depends on residues His-223 and Asp-238.

It belongs to the peptidase C58 family.

In terms of biological role, potential cysteine protease, which may play a central role after invasion of host cell. The protein is Putative cysteine protease YopT-like blr2058 of Bradyrhizobium diazoefficiens (strain JCM 10833 / BCRC 13528 / IAM 13628 / NBRC 14792 / USDA 110).